Here is a 221-residue protein sequence, read N- to C-terminus: Protein RER1D (221 aa).

4 consecutive transmembrane segments (helical) span residues 41 to 58 (IVRR…YIYR), 64 to 84 (GYFV…IGFL), 128 to 148 (FVVA…FWPI), and 149 to 169 (LLCY…VHMF). The interval 200-221 (KGDGGDDRPSSSNSSQGNEKQD) is disordered. A compositionally biased stretch (polar residues) spans 209-221 (SSSNSSQGNEKQD).

Belongs to the RER1 family.

It is found in the membrane. In terms of biological role, involved in the retrieval of endoplasmic reticulum membrane proteins from the early Golgi compartment. The chain is Protein RER1D from Arabidopsis thaliana (Mouse-ear cress).